Reading from the N-terminus, the 121-residue chain is Small ribosomal subunit protein uS13 (121 aa).

The disordered stretch occupies residues His91–Lys121.

It belongs to the universal ribosomal protein uS13 family. As to quaternary structure, part of the 30S ribosomal subunit. Forms a loose heterodimer with protein S19. Forms two bridges to the 50S subunit in the 70S ribosome.

Its function is as follows. Located at the top of the head of the 30S subunit, it contacts several helices of the 16S rRNA. In the 70S ribosome it contacts the 23S rRNA (bridge B1a) and protein L5 of the 50S subunit (bridge B1b), connecting the 2 subunits; these bridges are implicated in subunit movement. Contacts the tRNAs in the A and P-sites. In Staphylococcus epidermidis (strain ATCC 35984 / DSM 28319 / BCRC 17069 / CCUG 31568 / BM 3577 / RP62A), this protein is Small ribosomal subunit protein uS13.